The chain runs to 420 residues: Polymerase delta-interacting protein 3 (420 aa).

A2 is modified (N-acetylalanine). S5 carries the post-translational modification Phosphoserine. The residue at position 33 (R33) is an Omega-N-methylarginine. The residue at position 127 (S127) is a Phosphoserine. At T140 the chain carries Phosphothreonine. K200 participates in a covalent cross-link: Glycyl lysine isopeptide (Lys-Gly) (interchain with G-Cter in SUMO2). S215 and S217 each carry phosphoserine. Residue K223 forms a Glycyl lysine isopeptide (Lys-Gly) (interchain with G-Cter in SUMO2) linkage. S244 carries the post-translational modification Phosphoserine. K248 participates in a covalent cross-link: Glycyl lysine isopeptide (Lys-Gly) (interchain with G-Cter in SUMO2). Residues 256–277 form a disordered region; sequence TLVNKEEPPKELPPAEPVLSPL. At S275 the chain carries Phosphoserine. Residues 280–351 enclose the RRM domain; that stretch reads TKMTVNNLHP…QPMKCNLHMN (72 aa). The segment at 369–394 is disordered; that stretch reads PSVKKESELPRRGNPASSNPPAEVDP. Positions 370-379 are enriched in basic and acidic residues; sequence SVKKESELPR. K372 is covalently cross-linked (Glycyl lysine isopeptide (Lys-Gly) (interchain with G-Cter in SUMO2)). S385 carries the post-translational modification Phosphoserine. A Glycyl lysine isopeptide (Lys-Gly) (interchain with G-Cter in SUMO2) cross-link involves residue K417.

As to quaternary structure, interacts with POLD2. Interacts with NCBP1 and EIF4A3. Associates with the multiprotein exon junction complex (EJC). Interacts with RPS6KB1 (activated). Interacts with ERH. Interacts with THOC2, DDX39B and ZC3H11A; the interactions are ATP-dependent and indicative for an association with the TREX complex.

The protein resides in the nucleus. Its subcellular location is the nucleus speckle. It localises to the cytoplasm. Is involved in regulation of translation. Is preferentially associated with CBC-bound spliced mRNA-protein complexes during the pioneer round of mRNA translation. Contributes to enhanced translational efficiency of spliced over nonspliced mRNAs. Recruits activated ribosomal protein S6 kinase beta-1 I/RPS6KB1 to newly synthesized mRNA. Involved in nuclear mRNA export; probably mediated by association with the TREX complex. The chain is Polymerase delta-interacting protein 3 (Poldip3) from Mus musculus (Mouse).